Consider the following 198-residue polypeptide: FMN-dependent NADH:quinone oxidoreductase (198 aa).

Residues Ser-10, 16–18 (SQS), 94–97 (MYNF), and 138–141 (TRGG) contribute to the FMN site.

This sequence belongs to the azoreductase type 1 family. In terms of assembly, homodimer. It depends on FMN as a cofactor.

It catalyses the reaction 2 a quinone + NADH + H(+) = 2 a 1,4-benzosemiquinone + NAD(+). The catalysed reaction is N,N-dimethyl-1,4-phenylenediamine + anthranilate + 2 NAD(+) = 2-(4-dimethylaminophenyl)diazenylbenzoate + 2 NADH + 2 H(+). Functionally, quinone reductase that provides resistance to thiol-specific stress caused by electrophilic quinones. Also exhibits azoreductase activity. Catalyzes the reductive cleavage of the azo bond in aromatic azo compounds to the corresponding amines. The chain is FMN-dependent NADH:quinone oxidoreductase from Shewanella sp. (strain MR-4).